Consider the following 394-residue polypeptide: Putative serine protease HhoA (394 aa).

The signal sequence occupies residues 1-24 (MKYPTWLRRIGGYLLAFAVGTAFG). In terms of domain architecture, PDZ spans 293-377 (MMNITVDQAQ…ALKLDLLRGD (85 aa)).

The protein belongs to the peptidase S1C family.

It is found in the periplasm. A putative protease, its function overlaps that of the related putative proteases HhoB and HtrA. This chain is Putative serine protease HhoA (hhoA), found in Synechocystis sp. (strain ATCC 27184 / PCC 6803 / Kazusa).